The following is a 1494-amino-acid chain: DNA-directed RNA polymerase subunit beta' (1494 aa).

Residues Cys-67, Cys-69, Cys-82, and Cys-85 each coordinate Zn(2+). 3 residues coordinate Mg(2+): Asp-499, Asp-501, and Asp-503. Zn(2+) is bound by residues Cys-868, Cys-944, Cys-951, and Cys-954.

It belongs to the RNA polymerase beta' chain family. The RNAP catalytic core consists of 2 alpha, 1 beta, 1 beta' and 1 omega subunit. When a sigma factor is associated with the core the holoenzyme is formed, which can initiate transcription. Mg(2+) is required as a cofactor. Zn(2+) serves as cofactor.

The catalysed reaction is RNA(n) + a ribonucleoside 5'-triphosphate = RNA(n+1) + diphosphate. In terms of biological role, DNA-dependent RNA polymerase catalyzes the transcription of DNA into RNA using the four ribonucleoside triphosphates as substrates. This chain is DNA-directed RNA polymerase subunit beta', found in Chlorobaculum parvum (strain DSM 263 / NCIMB 8327) (Chlorobium vibrioforme subsp. thiosulfatophilum).